The chain runs to 483 residues: Glutamyl-tRNA(Gln) amidotransferase subunit A (483 aa).

Catalysis depends on charge relay system residues Lys75 and Ser150. Catalysis depends on Ser174, which acts as the Acyl-ester intermediate.

The protein belongs to the amidase family. GatA subfamily. In terms of assembly, heterotrimer of A, B and C subunits.

The enzyme catalyses L-glutamyl-tRNA(Gln) + L-glutamine + ATP + H2O = L-glutaminyl-tRNA(Gln) + L-glutamate + ADP + phosphate + H(+). Its function is as follows. Allows the formation of correctly charged Gln-tRNA(Gln) through the transamidation of misacylated Glu-tRNA(Gln) in organisms which lack glutaminyl-tRNA synthetase. The reaction takes place in the presence of glutamine and ATP through an activated gamma-phospho-Glu-tRNA(Gln). The polypeptide is Glutamyl-tRNA(Gln) amidotransferase subunit A (Legionella pneumophila subsp. pneumophila (strain Philadelphia 1 / ATCC 33152 / DSM 7513)).